Reading from the N-terminus, the 463-residue chain is UDP-N-acetylmuramoylalanine--D-glutamate ligase (463 aa).

ATP is bound at residue 109 to 115 (GTDGKST).

It belongs to the MurCDEF family.

It localises to the cytoplasm. The enzyme catalyses UDP-N-acetyl-alpha-D-muramoyl-L-alanine + D-glutamate + ATP = UDP-N-acetyl-alpha-D-muramoyl-L-alanyl-D-glutamate + ADP + phosphate + H(+). The protein operates within cell wall biogenesis; peptidoglycan biosynthesis. In terms of biological role, cell wall formation. Catalyzes the addition of glutamate to the nucleotide precursor UDP-N-acetylmuramoyl-L-alanine (UMA). The polypeptide is UDP-N-acetylmuramoylalanine--D-glutamate ligase (Leptospira interrogans serogroup Icterohaemorrhagiae serovar copenhageni (strain Fiocruz L1-130)).